The primary structure comprises 390 residues: Putative methylesterase 11, chloroplastic (390 aa).

The N-terminal 46 residues, 1–46, are a transit peptide targeting the chloroplast; the sequence is MGNLCSLFTPPKPVKKRKPITKRQSSIGASSSGSGLNSNRWNNRVR. 2 disordered regions span residues 1 to 52 and 94 to 119; these read MGNL…SSRR and QGSC…DPLL. Low complexity predominate over residues 25–48; it reads SSIGASSSGSGLNSNRWNNRVRSS. Residues 94 to 104 show a composition bias toward polar residues; sequence QGSCSKKNQLP. The segment covering 105 to 114 has biased composition (low complexity); sequence RSSSSRSRSS. The 105-residue stretch at 137 to 241 folds into the AB hydrolase-1 domain; that stretch reads NHFVLVHGGS…KAVFLAAAML (105 aa). The active-site Acyl-ester intermediate is Asp-213. Residues Asp-339 and His-367 each act as charge relay system in the active site.

It belongs to the AB hydrolase superfamily. Methylesterase family.

It is found in the plastid. Its subcellular location is the chloroplast. In terms of biological role, putative methylesterase. The chain is Putative methylesterase 11, chloroplastic from Arabidopsis thaliana (Mouse-ear cress).